The primary structure comprises 260 residues: 3'-5' ssDNA/RNA exonuclease TatD (260 aa).

3 residues coordinate a divalent metal cation: Glu92, His128, and His153.

The protein belongs to the metallo-dependent hydrolases superfamily. TatD-type hydrolase family. TatD subfamily. As to quaternary structure, monomer. The cofactor is Mg(2+).

Its subcellular location is the cytoplasm. Functionally, 3'-5' exonuclease that prefers single-stranded DNA and RNA. May play a role in the H(2)O(2)-induced DNA damage repair. The polypeptide is 3'-5' ssDNA/RNA exonuclease TatD (Yersinia pseudotuberculosis serotype O:3 (strain YPIII)).